Reading from the N-terminus, the 78-residue chain is Exodeoxyribonuclease 7 small subunit (78 aa).

It belongs to the XseB family. In terms of assembly, heterooligomer composed of large and small subunits.

The protein resides in the cytoplasm. It catalyses the reaction Exonucleolytic cleavage in either 5'- to 3'- or 3'- to 5'-direction to yield nucleoside 5'-phosphates.. In terms of biological role, bidirectionally degrades single-stranded DNA into large acid-insoluble oligonucleotides, which are then degraded further into small acid-soluble oligonucleotides. This is Exodeoxyribonuclease 7 small subunit from Pediococcus pentosaceus (strain ATCC 25745 / CCUG 21536 / LMG 10740 / 183-1w).